We begin with the raw amino-acid sequence, 241 residues long: Synaptogyrin (241 aa).

An MARVEL domain is found at 30 to 179; sequence FAMKPQVVIR…CALMAYKRFL (150 aa). 4 helical membrane-spanning segments follow: residues 34–54, 81–101, 115–135, and 155–175; these read PQVV…GCIS, MVGV…FLFE, ADMG…LYLW, and TAIW…LMAY. Positions 216-241 are disordered; it reads ASPFGQPQQGGMEQQQSGMEYQQPTY. Positions 220 to 241 are enriched in low complexity; that stretch reads GQPQQGGMEQQQSGMEYQQPTY.

It belongs to the synaptogyrin family.

It localises to the cytoplasmic vesicle membrane. Its subcellular location is the cytoplasmic vesicle. The protein localises to the secretory vesicle membrane. It is found in the secretory vesicle. The protein resides in the synaptic vesicle membrane. Functionally, required for the correct formation of synaptic vesicles at nerve terminals and has a role in the regulation of the synaptic vesicle exo-endocytic cycle. The chain is Synaptogyrin from Drosophila melanogaster (Fruit fly).